Consider the following 214-residue polypeptide: ATP-dependent Clp protease proteolytic subunit (214 aa).

Ser-114 acts as the Nucleophile in catalysis. His-139 is a catalytic residue.

Belongs to the peptidase S14 family. In terms of assembly, fourteen ClpP subunits assemble into 2 heptameric rings which stack back to back to give a disk-like structure with a central cavity, resembling the structure of eukaryotic proteasomes.

It is found in the cytoplasm. The enzyme catalyses Hydrolysis of proteins to small peptides in the presence of ATP and magnesium. alpha-casein is the usual test substrate. In the absence of ATP, only oligopeptides shorter than five residues are hydrolyzed (such as succinyl-Leu-Tyr-|-NHMec, and Leu-Tyr-Leu-|-Tyr-Trp, in which cleavage of the -Tyr-|-Leu- and -Tyr-|-Trp bonds also occurs).. Cleaves peptides in various proteins in a process that requires ATP hydrolysis. Has a chymotrypsin-like activity. Plays a major role in the degradation of misfolded proteins. This chain is ATP-dependent Clp protease proteolytic subunit, found in Nitrosomonas eutropha (strain DSM 101675 / C91 / Nm57).